The following is a 70-amino-acid chain: Protein SlyX homolog (70 aa).

This sequence belongs to the SlyX family.

This Shewanella oneidensis (strain ATCC 700550 / JCM 31522 / CIP 106686 / LMG 19005 / NCIMB 14063 / MR-1) protein is Protein SlyX homolog.